A 644-amino-acid polypeptide reads, in one-letter code: Protein cueball (644 aa).

An N-terminal signal peptide occupies residues 1–26 (MIRIRFGMDVLLVLLLATCLLTPAHG). Residues 27–531 (TPLEWDFAVT…VCLTPRVWTS (505 aa)) are Extracellular-facing. N-linked (GlcNAc...) asparagine glycosylation is found at Asn-82 and Asn-108. LDL-receptor class B repeat units lie at residues 121 to 166 (MNLF…DVCR), 167 to 211 (RKLY…DQLS), and 212 to 257 (DRLF…TNDA). Residues Asn-175 and Asn-190 are each glycosylated (N-linked (GlcNAc...) asparagine). Residues 280–301 (TTTSKPEEEDSTDSTDFTDPEP) are disordered. Acidic residues predominate over residues 286-301 (EEEDSTDSTDFTDPEP). The N-linked (GlcNAc...) asparagine glycan is linked to Asn-313. EGF-like domains follow at residues 398–430 (EIRECHNYCVHGTCQMSELAYPKCYCQPGFTGE) and 433–471 (ELSVCSGLCLNGGHCRVSKDENEAPSCECPAKFGGARCE). Disulfide bonds link Cys-402/Cys-411, Cys-406/Cys-421, Cys-437/Cys-447, Cys-441/Cys-459, and Cys-461/Cys-470. N-linked (GlcNAc...) asparagine glycosylation is found at Asn-473 and Asn-508. The helical transmembrane segment at 532-552 (SVIIILVVGIVSSLLLVAVIV) threads the bilayer. The Cytoplasmic segment spans residues 553–644 (HGIRRLYKPK…LIHNMEDDLY (92 aa)).

It belongs to the cueball family.

The protein resides in the cell membrane. In terms of biological role, has a role in spermatogenesis and oogenesis. This chain is Protein cueball, found in Drosophila sechellia (Fruit fly).